A 500-amino-acid polypeptide reads, in one-letter code: MAPSGGQEAQICDSETFGDSDFVVVANRLPVDLERLPDGSTTWKRSPGGLVTALEPVLRRRRGAWVGWPGVNDDGAEPDLHVLDGPIIQDELELHPVRLSTTDIAQYYEGFSNATLWPLYHDVIVKPLYHREWWDRYVDVNQRFAEAASRAAAHGATVWVQDYQLQLVPKMLRMLRPDLTIGFFLHIPFPPVELFMQMPWRTEIIQGLLGADLVGFHLPGGAQNFLILSRRLVGTDTSRGTVGVRSRFGAAVLGSRTIRVGAFPISVDSGALDHAARDRNIRRRAREIRTELGNPRKILLGVDRLDYTKGIDVRLKAFSELLAEGRVKRDDTVVVQLATPSRERVESYQTLRNDIERQVGHINGEYGEVGHPVVHYLHRPAPRDELIAFFVASDVMLVTPLRDGMNLVAKEYVACRSDLGGALVLSEFTGAAAELRHAYLVNPHDLEGVKDGIEEALNQTEEAGRRRMRSLRRQVLAHDVDRWAQSFLDALAGAHPRGQG.

Arg-28 serves as a coordination point for D-glucose 6-phosphate. Residue 48-49 (GG) coordinates UDP-alpha-D-glucose. Positions 108 and 162 each coordinate D-glucose 6-phosphate. Arg-304 and Lys-309 together coordinate UDP-alpha-D-glucose. D-glucose 6-phosphate is bound at residue Arg-342. Position 407–411 (407–411 (LVAKE)) interacts with UDP-alpha-D-glucose.

It belongs to the glycosyltransferase 20 family. As to quaternary structure, homotetramer.

It carries out the reaction ADP-alpha-D-glucose + D-glucose 6-phosphate = alpha,alpha-trehalose 6-phosphate + ADP + H(+). It catalyses the reaction CDP-alpha-D-glucose + D-glucose 6-phosphate = alpha,alpha-trehalose 6-phosphate + CDP + H(+). The catalysed reaction is GDP-alpha-D-glucose + D-glucose 6-phosphate = alpha,alpha-trehalose 6-phosphate + GDP + H(+). The enzyme catalyses TDP-alpha-D-glucose + D-glucose 6-phosphate = 5-methyl-UDP + alpha,alpha-trehalose 6-phosphate + H(+). It carries out the reaction D-glucose 6-phosphate + UDP-alpha-D-glucose = alpha,alpha-trehalose 6-phosphate + UDP + H(+). It functions in the pathway glycan biosynthesis; trehalose biosynthesis. Functionally, probably involved in the osmoprotection via the biosynthesis of trehalose and in the production of glycogen and alpha-glucan via the TreS-Pep2 branch involved in the biosynthesis of maltose-1-phosphate (M1P). Catalyzes the transfer of glucose from UDP-glucose (UDP-Glc) to D-glucose 6-phosphate (Glc-6-P) to form trehalose-6-phosphate. Probably also able to use ADP-Glc, CDP-Glc, GDP-Glc and TDP-Glc as glucosyl donors. The sequence is that of Trehalose-6-phosphate synthase from Mycobacterium tuberculosis (strain CDC 1551 / Oshkosh).